Reading from the N-terminus, the 130-residue chain is Small ribosomal subunit protein uS9 (130 aa).

It belongs to the universal ribosomal protein uS9 family.

This chain is Small ribosomal subunit protein uS9, found in Teredinibacter turnerae (strain ATCC 39867 / T7901).